We begin with the raw amino-acid sequence, 154 residues long: Large ribosomal subunit protein uL30 (154 aa).

The interval 114-139 (PTLRLHPPRGGHDGIKHPTKEGGQLG) is disordered. The span at 123–133 (GGHDGIKHPTK) shows a compositional bias: basic and acidic residues.

Belongs to the universal ribosomal protein uL30 family. In terms of assembly, part of the 50S ribosomal subunit.

In Natronomonas pharaonis (strain ATCC 35678 / DSM 2160 / CIP 103997 / JCM 8858 / NBRC 14720 / NCIMB 2260 / Gabara) (Halobacterium pharaonis), this protein is Large ribosomal subunit protein uL30.